The sequence spans 949 residues: Piwi-like protein 2 (949 aa).

The segment at 1-125 is disordered; that stretch reads MDPTRPPFRG…SLSTRVQQAS (125 aa). Residues 115 to 125 show a composition bias toward polar residues; that stretch reads PSLSTRVQQAS. The PAZ domain maps to 366-478; the sequence is SVLDIMNILY…LLPELAFMTG (113 aa). Residues 644–935 enclose the Piwi domain; that stretch reads LLVCLISGTR…LAFLSGQFLH (292 aa). Catalysis depends on residues Asp-721, Glu-759, Asp-791, and His-924.

It belongs to the argonaute family. Piwi subfamily. Component of the PET complex. Mg(2+) is required as a cofactor. In terms of processing, methylated on arginine residues; required for the interaction with Tudor domain-containing protein and subsequent localization to the meiotic nuage, also named P granule. In terms of tissue distribution, expressed in oocytes, testis and liver (at protein level).

The protein localises to the cytoplasm. It is found in the nucleus. In terms of biological role, endoribonuclease that plays a central role during spermatogenesis by repressing transposable elements and preventing their mobilization, which is essential for the germline integrity. Plays an essential role in meiotic differentiation of spermatocytes, germ cell differentiation and in self-renewal of spermatogonial stem cells. Acts via the piRNA metabolic process, which mediates the repression of transposable elements during meiosis by forming complexes composed of piRNAs and Piwi proteins and govern the methylation and subsequent repression of transposons. During piRNA biosynthesis, plays a key role in the piRNA amplification loop, also named ping-pong amplification cycle, by acting as a 'slicer-competent' piRNA endoribonuclease that cleaves primary piRNAs, which are then loaded onto 'slicer-incompetent' piwil4. Piwil2 slicing produces a pre-miRNA intermediate, which is then processed in mature piRNAs, and as well as a 16 nucleotide by-product that is degraded. Required for piwil4/miwi2 nuclear localization and association with secondary piRNAs antisense. Represses circadian rhythms by promoting the stability and activity of core clock components BMAL1 and CLOCK. This Xenopus tropicalis (Western clawed frog) protein is Piwi-like protein 2 (piwil2).